We begin with the raw amino-acid sequence, 302 residues long: Protoheme IX farnesyltransferase (302 aa).

The next 9 helical transmembrane spans lie at 26-46 (VVVLMVFTAIVGMFLASPGQV), 48-68 (WVALTVGSLGIALAAGSAAAL), 98-118 (VLGFSSLLGVAGLGMLALWIN), 120-140 (LTAALTFASLIGYALVYTLYL), 148-168 (IVIGGAAGAAPPLLGWTAVTG), 174-194 (ALLLFLIVFVWTPPHFWALAV), 221-241 (ILLYTVLLLAVSLLPWATFMG), 244-264 (LYLAAAVGLGGWYLMLNVRLL), and 280-300 (IIYLFGLFAALLVDRQLPVWL).

It belongs to the UbiA prenyltransferase family. Protoheme IX farnesyltransferase subfamily.

Its subcellular location is the cell inner membrane. It carries out the reaction heme b + (2E,6E)-farnesyl diphosphate + H2O = Fe(II)-heme o + diphosphate. Its pathway is porphyrin-containing compound metabolism; heme O biosynthesis; heme O from protoheme: step 1/1. Its function is as follows. Converts heme B (protoheme IX) to heme O by substitution of the vinyl group on carbon 2 of heme B porphyrin ring with a hydroxyethyl farnesyl side group. This Alkalilimnicola ehrlichii (strain ATCC BAA-1101 / DSM 17681 / MLHE-1) protein is Protoheme IX farnesyltransferase.